The sequence spans 303 residues: Proteasome subunit beta (303 aa).

Residues 1-67 (MTWQFPDRLS…SGGTGQLPHG (67 aa)) constitute a propeptide, removed in mature form; by autocatalysis. Catalysis depends on Thr68, which acts as the Nucleophile.

It belongs to the peptidase T1B family. As to quaternary structure, the 20S proteasome core is composed of 14 alpha and 14 beta subunits that assemble into four stacked heptameric rings, resulting in a barrel-shaped structure. The two inner rings, each composed of seven catalytic beta subunits, are sandwiched by two outer rings, each composed of seven alpha subunits. The catalytic chamber with the active sites is on the inside of the barrel. Has a gated structure, the ends of the cylinder being occluded by the N-termini of the alpha-subunits. Is capped by the proteasome-associated ATPase, ARC.

The protein localises to the cytoplasm. The catalysed reaction is Cleavage of peptide bonds with very broad specificity.. The protein operates within protein degradation; proteasomal Pup-dependent pathway. Its activity is regulated as follows. The formation of the proteasomal ATPase ARC-20S proteasome complex, likely via the docking of the C-termini of ARC into the intersubunit pockets in the alpha-rings, may trigger opening of the gate for substrate entry. Interconversion between the open-gate and close-gate conformations leads to a dynamic regulation of the 20S proteasome proteolysis activity. In terms of biological role, component of the proteasome core, a large protease complex with broad specificity involved in protein degradation. In Mycolicibacterium paratuberculosis (strain ATCC BAA-968 / K-10) (Mycobacterium paratuberculosis), this protein is Proteasome subunit beta.